We begin with the raw amino-acid sequence, 801 residues long: PR domain zinc finger protein 4 (801 aa).

An SET domain is found at Lys-412–Ser-529. The segment at His-545–His-566 adopts a C2H2-type 1; atypical zinc-finger fold. 4 consecutive C2H2-type zinc fingers follow at residues His-618–His-640, Tyr-646–His-668, Leu-674–His-696, and Ile-702–His-724. The C2H2-type 6; atypical zinc finger occupies Tyr-730–Cys-752. Residues Thr-751–Glu-782 form a disordered region. Residues Pro-762–Ala-776 are compositionally biased toward acidic residues.

Belongs to the class V-like SAM-binding methyltransferase superfamily.

The protein resides in the nucleus. In terms of biological role, may function as a transcription factor involved in cell differentiation. This is PR domain zinc finger protein 4 (PRDM4) from Pongo abelii (Sumatran orangutan).